A 611-amino-acid chain; its full sequence is Dihydroxy-acid dehydratase (611 aa).

D81 contacts Mg(2+). Position 122 (C122) interacts with [2Fe-2S] cluster. The Mg(2+) site is built by D123 and K124. K124 bears the N6-carboxylysine mark. C195 is a [2Fe-2S] cluster binding site. Residue E491 participates in Mg(2+) binding. S517 (proton acceptor) is an active-site residue.

This sequence belongs to the IlvD/Edd family. In terms of assembly, homodimer. [2Fe-2S] cluster serves as cofactor. It depends on Mg(2+) as a cofactor.

The enzyme catalyses (2R)-2,3-dihydroxy-3-methylbutanoate = 3-methyl-2-oxobutanoate + H2O. It carries out the reaction (2R,3R)-2,3-dihydroxy-3-methylpentanoate = (S)-3-methyl-2-oxopentanoate + H2O. The protein operates within amino-acid biosynthesis; L-isoleucine biosynthesis; L-isoleucine from 2-oxobutanoate: step 3/4. It participates in amino-acid biosynthesis; L-valine biosynthesis; L-valine from pyruvate: step 3/4. Functions in the biosynthesis of branched-chain amino acids. Catalyzes the dehydration of (2R,3R)-2,3-dihydroxy-3-methylpentanoate (2,3-dihydroxy-3-methylvalerate) into 2-oxo-3-methylpentanoate (2-oxo-3-methylvalerate) and of (2R)-2,3-dihydroxy-3-methylbutanoate (2,3-dihydroxyisovalerate) into 2-oxo-3-methylbutanoate (2-oxoisovalerate), the penultimate precursor to L-isoleucine and L-valine, respectively. This Histophilus somni (strain 2336) (Haemophilus somnus) protein is Dihydroxy-acid dehydratase.